A 211-amino-acid polypeptide reads, in one-letter code: MDHKGTDPGFMNPVAGFGVTFKAMFKKRLTEQYPEQQKTTAPRFHGRHQLNRHPDGLEKCVGCELCAWACPADAIYVEGADNTDEERYSPGERYGRVYQINYARCILCGLCIEACPTRALTMTNEFELADSSRANLIFTKEQLLAGLEEGMVDSPHAIYPGTDEQDYYRGLVTEAAPGTVQQVAHSKGEVVQEGDSTFGATEPASEEVIRR.

2 consecutive 4Fe-4S ferredoxin-type domains span residues 50 to 80 and 96 to 125; these read LNRHPDGLEKCVGCELCAWACPADAIYVEGA and RVYQINYARCILCGLCIEACPTRALTMTNE. [4Fe-4S] cluster is bound by residues C60, C63, C66, C70, C105, C108, C111, and C115. Residues 192–211 are disordered; sequence QEGDSTFGATEPASEEVIRR.

It belongs to the complex I 23 kDa subunit family. In terms of assembly, NDH-1 is composed of 14 different subunits. Subunits NuoA, H, J, K, L, M, N constitute the membrane sector of the complex. Requires [4Fe-4S] cluster as cofactor.

It is found in the cell membrane. It catalyses the reaction a quinone + NADH + 5 H(+)(in) = a quinol + NAD(+) + 4 H(+)(out). In terms of biological role, NDH-1 shuttles electrons from NADH, via FMN and iron-sulfur (Fe-S) centers, to quinones in the respiratory chain. The immediate electron acceptor for the enzyme in this species is believed to be ubiquinone. Couples the redox reaction to proton translocation (for every two electrons transferred, four hydrogen ions are translocated across the cytoplasmic membrane), and thus conserves the redox energy in a proton gradient. This chain is NADH-quinone oxidoreductase subunit I 1, found in Streptomyces coelicolor (strain ATCC BAA-471 / A3(2) / M145).